The sequence spans 690 residues: Protein MODIFIED TRANSPORT TO THE VACUOLE 1 (690 aa).

The VHS domain maps to 20–150 (VTSDEDKVAP…PESINRRIEG (131 aa)). Disordered stretches follow at residues 228 to 258 (DGNY…SVRV) and 518 to 551 (FSID…HQAP). Residues 243–257 (GHASGEASESSASVR) are compositionally biased toward low complexity. Residues 520–536 (IDENNSNQKGSSSSTLP) are compositionally biased toward polar residues.

Binds to clathrin heavy chain. Expressed in inflorescence stems, stigmas, roots, roots meristems, embryos, and floral and leaf vasculatures, but absent from the floral abscission zone.

Its subcellular location is the golgi apparatus. The protein resides in the trans-Golgi network. It localises to the cytoplasmic vesicle. The protein localises to the clathrin-coated vesicle. In terms of biological role, mediates clathrin-dependent trafficking of vacuolar cargo from the trans-Golgi network (TGN). Promotes plant growth. The polypeptide is Protein MODIFIED TRANSPORT TO THE VACUOLE 1 (Arabidopsis thaliana (Mouse-ear cress)).